Reading from the N-terminus, the 1382-residue chain is Hepatocyte growth factor receptor (1382 aa).

Residues 1–24 (MKAPAVLAPGILVLLFTLVQKSYG) form the signal peptide. Topologically, residues 25 to 935 (ECKEALVKSE…VQPDQNFTGL (911 aa)) are extracellular. A Sema domain is found at 27-516 (KEALVKSEMN…TGKKITRIPL (490 aa)). Asparagine 45 carries N-linked (GlcNAc...) asparagine glycosylation. 4 cysteine pairs are disulfide-bonded: cysteine 95–cysteine 101, cysteine 98–cysteine 160, cysteine 133–cysteine 141, and cysteine 173–cysteine 176. Asparagine 106 carries an N-linked (GlcNAc...) asparagine glycan. 2 N-linked (GlcNAc...) asparagine glycosylation sites follow: asparagine 203 and asparagine 359. Cystine bridges form between cysteine 299–cysteine 364 and cysteine 386–cysteine 398. N-linked (GlcNAc...) asparagine glycans are attached at residues asparagine 400 and asparagine 406. 4 cysteine pairs are disulfide-bonded: cysteine 521/cysteine 539, cysteine 527/cysteine 562, cysteine 530/cysteine 546, and cysteine 542/cysteine 552. 3 IPT/TIG domains span residues 564–656 (PAIY…FSYV), 658–740 (PIIT…FSYQ), and 743–837 (PIVY…LIYV). Threonine 583 carries O-linked (Man) threonine glycosylation. 2 N-linked (GlcNAc...) asparagine glycosylation sites follow: asparagine 608 and asparagine 636. O-linked (Man) threonine glycans are attached at residues threonine 677 and threonine 762. 3 N-linked (GlcNAc...) asparagine glycosylation sites follow: asparagine 786, asparagine 880, and asparagine 931. The helical transmembrane segment at 936-956 (IAGVISISTIVLLLLGLFLWL) threads the bilayer. Residues 957–1379 (KRKKQIKDLG…LSSQDNIDGE (423 aa)) are Cytoplasmic-facing. Serine 967 bears the Phosphoserine mark. Threonine 978 is modified (phosphothreonine). Serine 991, serine 998, and serine 1001 each carry phosphoserine. Tyrosine 1004 bears the Phosphotyrosine mark. In terms of domain architecture, Protein kinase spans 1079–1346 (VHFNEVIGRG…RISAIFSTFI (268 aa)). ATP-binding positions include 1085–1093 (IGRGHFGCV) and lysine 1111. Residue aspartate 1205 is the Proton acceptor of the active site. The interval 1213–1382 (LDEKFTVKVA…QDNIDGEGDT (170 aa)) is interaction with RANBP9. Tyrosine 1231 carries the post-translational modification Phosphotyrosine. Residues tyrosine 1235 and tyrosine 1236 each carry the phosphotyrosine; by autocatalysis modification. Threonine 1290 carries the phosphothreonine modification. The tract at residues 1321–1360 (WHPRAELRPSFSELVSRISAIFSTFIGEHYVHVNATYVNV) is interaction with MUC20. Phosphotyrosine; by autocatalysis is present on residues tyrosine 1350 and tyrosine 1357. Tyrosine 1366 carries the post-translational modification Phosphotyrosine.

This sequence belongs to the protein kinase superfamily. Tyr protein kinase family. As to quaternary structure, heterodimer made of an alpha chain (50 kDa) and a beta chain (145 kDa) which are disulfide linked. Binds PLXNB1. Interacts when phosphorylated with downstream effectors including STAT3, PIK3R1, SRC, PCLG1, GRB2 and GAB1. Interacts with SPSB1, SPSB2 and SPSB4. Interacts with INPP5D/SHIP1. When phosphorylated at Tyr-1357, interacts with INPPL1/SHIP2. Interacts with RANBP9 and RANBP10, as well as SPSB1, SPSB2, SPSB3 and SPSB4. SPSB1 binding occurs in the presence and in the absence of HGF, however HGF treatment has a positive effect on this interaction. Interacts with MUC20; prevents interaction with GRB2 and suppresses hepatocyte growth factor-induced cell proliferation. Interacts with GRB10. Interacts with PTPN1 and PTPN2. Interacts with HSP90AA1 and HSP90AB1; the interaction suppresses MET kinase activity. Interacts with tensin TNS3. Interacts (when phosphorylated) with tensin TNS4 (via SH2 domain); the interaction increases MET protein stability by inhibiting MET endocytosis and subsequent lysosomal degradation. (Microbial infection) Interacts with L.monocytogenes InlB. InlB probably dimerizes upon binding to MET, which encourages subsequent dimerization of MET. Post-translationally, autophosphorylated in response to ligand binding on Tyr-1235 and Tyr-1236 in the kinase domain leading to further phosphorylation of Tyr-1350 and Tyr-1357 in the C-terminal multifunctional docking site. Dephosphorylated by PTPRJ at Tyr-1350 and Tyr-1366. Dephosphorylated by PTPN1 and PTPN2. In terms of processing, ubiquitinated. Ubiquitination by CBL regulates the receptor stability and activity through proteasomal degradation. (Microbial infection) Tyrosine phosphorylation is stimulated by L.monocytogenes InlB. Post-translationally, O-mannosylation of IPT/TIG domains by TMEM260 is required for protein maturation. O-mannosylated residues are composed of single mannose glycans that are not elongated or modified.

Its subcellular location is the membrane. The catalysed reaction is L-tyrosyl-[protein] + ATP = O-phospho-L-tyrosyl-[protein] + ADP + H(+). Its activity is regulated as follows. In its inactive state, the C-terminal tail interacts with the catalytic domain and inhibits the kinase activity. Upon ligand binding, the C-terminal tail is displaced and becomes phosphorylated, thus increasing the kinase activity. Its function is as follows. Receptor tyrosine kinase that transduces signals from the extracellular matrix into the cytoplasm by binding to hepatocyte growth factor/HGF ligand. Regulates many physiological processes including proliferation, scattering, morphogenesis and survival. Ligand binding at the cell surface induces autophosphorylation of MET on its intracellular domain that provides docking sites for downstream signaling molecules. Following activation by ligand, interacts with the PI3-kinase subunit PIK3R1, PLCG1, SRC, GRB2, STAT3 or the adapter GAB1. Recruitment of these downstream effectors by MET leads to the activation of several signaling cascades including the RAS-ERK, PI3 kinase-AKT, or PLCgamma-PKC. The RAS-ERK activation is associated with the morphogenetic effects while PI3K/AKT coordinates prosurvival effects. During embryonic development, MET signaling plays a role in gastrulation, development and migration of muscles and neuronal precursors, angiogenesis and kidney formation. In adults, participates in wound healing as well as organ regeneration and tissue remodeling. Also promotes differentiation and proliferation of hematopoietic cells. In terms of biological role, (Microbial infection) Acts as a receptor for Listeria monocytogenes internalin InlB, mediating entry of the pathogen into cells. The polypeptide is Hepatocyte growth factor receptor (MET) (Canis lupus familiaris (Dog)).